The primary structure comprises 336 residues: Eukaryotic translation initiation factor 3 subunit I (336 aa).

WD repeat units follow at residues 8 to 47, 50 to 91, 146 to 185, 190 to 229, and 287 to 326; these read GHERSLTQIKFNRDGDLLFSVSKDKIVCAWWTANGERLGT, GHLG…KVWE, CNESKATVAGWSYLGKYIIAGHEDGSVSQYDAKTGDQLEN, EFDHQINDIQFSADRTYFITASKDKSAKLISSRNLAILKT, and GHFGPLNTVGVHPNGTAYASGGEDGYVRVHHFDKPYFDFM.

This sequence belongs to the eIF-3 subunit I family. As to quaternary structure, component of the eukaryotic translation initiation factor 3 (eIF-3) complex.

The protein localises to the cytoplasm. Its function is as follows. Component of the eukaryotic translation initiation factor 3 (eIF-3) complex, which is involved in protein synthesis of a specialized repertoire of mRNAs and, together with other initiation factors, stimulates binding of mRNA and methionyl-tRNAi to the 40S ribosome. The eIF-3 complex specifically targets and initiates translation of a subset of mRNAs involved in cell proliferation. This is Eukaryotic translation initiation factor 3 subunit I (tif34) from Aspergillus terreus (strain NIH 2624 / FGSC A1156).